We begin with the raw amino-acid sequence, 224 residues long: uncharacterized protein (224 aa).

The active site involves Asp-52.

This sequence belongs to the pseudouridine synthase RluA family.

It carries out the reaction a uridine in RNA = a pseudouridine in RNA. This is an uncharacterized protein from Haemophilus influenzae (strain ATCC 51907 / DSM 11121 / KW20 / Rd).